A 357-amino-acid polypeptide reads, in one-letter code: 3-dehydroquinate synthase (357 aa).

NAD(+) is bound by residues G104–D108, T128–T129, K141, and F168–T171. Zn(2+) is bound by residues E183, H243, and H260.

This sequence belongs to the sugar phosphate cyclases superfamily. Dehydroquinate synthase family. NAD(+) serves as cofactor. The cofactor is Co(2+). Requires Zn(2+) as cofactor.

It localises to the cytoplasm. It carries out the reaction 7-phospho-2-dehydro-3-deoxy-D-arabino-heptonate = 3-dehydroquinate + phosphate. The protein operates within metabolic intermediate biosynthesis; chorismate biosynthesis; chorismate from D-erythrose 4-phosphate and phosphoenolpyruvate: step 2/7. In terms of biological role, catalyzes the conversion of 3-deoxy-D-arabino-heptulosonate 7-phosphate (DAHP) to dehydroquinate (DHQ). This chain is 3-dehydroquinate synthase, found in Streptococcus pyogenes serotype M6 (strain ATCC BAA-946 / MGAS10394).